The following is a 401-amino-acid chain: Argininosuccinate synthase (401 aa).

ATP is bound by residues Ala10–Ser18 and Ala38. Tyr89 serves as a coordination point for L-citrulline. Gly119 serves as a coordination point for ATP. L-aspartate is bound by residues Thr121, Asn125, and Asp126. Asn125 is a binding site for L-citrulline. Residues Arg129, Ser177, Ser186, Glu262, and Tyr274 each contribute to the L-citrulline site.

It belongs to the argininosuccinate synthase family. Type 1 subfamily. In terms of assembly, homotetramer.

It localises to the cytoplasm. The catalysed reaction is L-citrulline + L-aspartate + ATP = 2-(N(omega)-L-arginino)succinate + AMP + diphosphate + H(+). Its pathway is amino-acid biosynthesis; L-arginine biosynthesis; L-arginine from L-ornithine and carbamoyl phosphate: step 2/3. This Synechococcus sp. (strain WH7803) protein is Argininosuccinate synthase.